The chain runs to 441 residues: Serine/threonine-protein phosphatase 4 regulatory subunit 2 (441 aa).

The segment covering 201–213 has biased composition (acidic residues); it reads DEEEGFFDGDEDR. Disordered regions lie at residues 201-220, 242-348, and 364-418; these read DEEE…NKSK, INDD…LTTP, and SPSS…SQED. The segment covering 249-261 has biased composition (polar residues); that stretch reads NKGQNCQSDVTKN. Over residues 264–302 the composition is skewed to acidic residues; that stretch reads DDEDDDDNDDDYREDGADEDDEDDDHMGSTDDDEDDDED. T347 bears the Phosphothreonine mark. Positions 388–398 are enriched in basic and acidic residues; the sequence is EDAHENHEGRS.

The protein belongs to the PPP4R2 family. As to quaternary structure, regulatory subunit (R2) of the histone H2A phosphatase complex (HTP-C) consisting of PPH3, PSY2 and PSY4. Interacts with SPT4 and SPT5.

Its subcellular location is the nucleus. Regulatory subunit of the histone H2A phosphatase complex, which dephosphorylates H2AS128ph (gamma-H2A) that has been displaced from sites of DNA lesions in the double-stranded DNA break repair process. Dephosphorylation is necessary for efficient recovery from the DNA damage checkpoint. This Saccharomyces cerevisiae (strain ATCC 204508 / S288c) (Baker's yeast) protein is Serine/threonine-protein phosphatase 4 regulatory subunit 2 (PSY4).